Reading from the N-terminus, the 513-residue chain is Histidine ammonia-lyase (513 aa).

The 5-imidazolinone (Ala-Gly) cross-link spans 144-146 (ASG). The residue at position 145 (Ser145) is a 2,3-didehydroalanine (Ser).

It belongs to the PAL/histidase family. Post-translationally, contains an active site 4-methylidene-imidazol-5-one (MIO), which is formed autocatalytically by cyclization and dehydration of residues Ala-Ser-Gly.

The protein localises to the cytoplasm. The enzyme catalyses L-histidine = trans-urocanate + NH4(+). It participates in amino-acid degradation; L-histidine degradation into L-glutamate; N-formimidoyl-L-glutamate from L-histidine: step 1/3. This is Histidine ammonia-lyase from Streptococcus pyogenes serotype M6 (strain ATCC BAA-946 / MGAS10394).